Reading from the N-terminus, the 161-residue chain is Phosphopantetheine adenylyltransferase (161 aa).

Residue Thr-9 coordinates substrate. ATP contacts are provided by residues 9–10 (TF) and His-17. Positions 41, 73, and 87 each coordinate substrate. Residues 88–90 (GLR), Glu-98, and 123–129 (LSYISST) each bind ATP.

This sequence belongs to the bacterial CoaD family. As to quaternary structure, homohexamer. Requires Mg(2+) as cofactor.

It is found in the cytoplasm. It carries out the reaction (R)-4'-phosphopantetheine + ATP + H(+) = 3'-dephospho-CoA + diphosphate. It participates in cofactor biosynthesis; coenzyme A biosynthesis; CoA from (R)-pantothenate: step 4/5. Functionally, reversibly transfers an adenylyl group from ATP to 4'-phosphopantetheine, yielding dephospho-CoA (dPCoA) and pyrophosphate. This is Phosphopantetheine adenylyltransferase from Hahella chejuensis (strain KCTC 2396).